The primary structure comprises 383 residues: Arginine biosynthesis bifunctional protein ArgJ (383 aa).

Substrate contacts are provided by Thr-146, Lys-168, Thr-179, Glu-259, Asn-378, and Ser-383. Thr-179 (nucleophile) is an active-site residue.

This sequence belongs to the ArgJ family. Heterotetramer of two alpha and two beta chains.

The protein resides in the cytoplasm. It carries out the reaction N(2)-acetyl-L-ornithine + L-glutamate = N-acetyl-L-glutamate + L-ornithine. The enzyme catalyses L-glutamate + acetyl-CoA = N-acetyl-L-glutamate + CoA + H(+). The protein operates within amino-acid biosynthesis; L-arginine biosynthesis; L-ornithine and N-acetyl-L-glutamate from L-glutamate and N(2)-acetyl-L-ornithine (cyclic): step 1/1. It participates in amino-acid biosynthesis; L-arginine biosynthesis; N(2)-acetyl-L-ornithine from L-glutamate: step 1/4. In terms of biological role, catalyzes two activities which are involved in the cyclic version of arginine biosynthesis: the synthesis of N-acetylglutamate from glutamate and acetyl-CoA as the acetyl donor, and of ornithine by transacetylation between N(2)-acetylornithine and glutamate. This chain is Arginine biosynthesis bifunctional protein ArgJ, found in Streptomyces avermitilis (strain ATCC 31267 / DSM 46492 / JCM 5070 / NBRC 14893 / NCIMB 12804 / NRRL 8165 / MA-4680).